Reading from the N-terminus, the 447-residue chain is Ribosomal protein uS12 methylthiotransferase RimO (447 aa).

The MTTase N-terminal domain occupies 10 to 120 (PKVGFVSLGC…VVNAVHDVVP (111 aa)). The [4Fe-4S] cluster site is built by cysteine 19, cysteine 55, cysteine 84, cysteine 153, cysteine 157, and cysteine 160. Residues 139-377 (LTPRHYAYLK…MAHQQAISAA (239 aa)) form the Radical SAM core domain. The 68-residue stretch at 380–447 (QMKIGKEIEV…DEYDLWAEML (68 aa)) folds into the TRAM domain.

This sequence belongs to the methylthiotransferase family. RimO subfamily. It depends on [4Fe-4S] cluster as a cofactor.

It is found in the cytoplasm. The catalysed reaction is L-aspartate(89)-[ribosomal protein uS12]-hydrogen + (sulfur carrier)-SH + AH2 + 2 S-adenosyl-L-methionine = 3-methylsulfanyl-L-aspartate(89)-[ribosomal protein uS12]-hydrogen + (sulfur carrier)-H + 5'-deoxyadenosine + L-methionine + A + S-adenosyl-L-homocysteine + 2 H(+). In terms of biological role, catalyzes the methylthiolation of an aspartic acid residue of ribosomal protein uS12. This Pseudomonas syringae pv. syringae (strain B728a) protein is Ribosomal protein uS12 methylthiotransferase RimO.